The chain runs to 232 residues: MKMAKRGKKYVEAAKLVDRAAAYSATEAVELVKKTNTAKFDATVEAAFRLGVDPKKADQQIRGAVVLPHGTGKVQRVLVFAKGEKAKEAEAAGADFVGDTDYIGKIQQGWFDFDVVVATPDMMGEVGKLGRVLGPKGLMPNPKTGTVTFDVTKAVNEIKAGKVEYRVDKAGNIHVPIGKVSFEDAKLVENFKTIADTLQKVKPAAAKGTYMKNVTVASTMGPGVRVDVSTLA.

Belongs to the universal ribosomal protein uL1 family. In terms of assembly, part of the 50S ribosomal subunit.

Binds directly to 23S rRNA. The L1 stalk is quite mobile in the ribosome, and is involved in E site tRNA release. In terms of biological role, protein L1 is also a translational repressor protein, it controls the translation of the L11 operon by binding to its mRNA. This chain is Large ribosomal subunit protein uL1, found in Bacillus cereus (strain ATCC 14579 / DSM 31 / CCUG 7414 / JCM 2152 / NBRC 15305 / NCIMB 9373 / NCTC 2599 / NRRL B-3711).